The sequence spans 1411 residues: MKDLLKLLKPTNQAEEFDGIRIALSSPDMIRSWSYGEVKKPETINYRTFKPERDGLFCARIFGPVKDYECLCGKYKRLKHRGVICEKCGVEVTLTKVRRERMGHIELASPVAHIWFLKSLPSRIGLMLDMTLRDIERVLYFESYVVTEGGLTSLEQGQILTEDEYLDALEEHGDEFDAKMGAEAVLDLLRAVDIDGDVQKLREELPETNSETKRKKISKRLKLLEAFQVSNNKPEWMILKVLPILPPDLRPLVPLDGGRFATSDLNDLYRRVINRNNRLKRLLDLAAPDIIVRNEKRMLQEAVDALLDNGRRGRAITGSNKRPLKSLADMIKGKQGRFRQNLLGKRVDYSGRSVITVGPKLRLHQCGLPKKMALELFKPFIYGKLERRGLATTIKAAKKMVERETAEVWDVLDEVIKEHPVLLNRAPTLHRLGIQAFEPVLIEGKAIQLHPLVCAAYNADFDGDQMAVHLPLTLEAQLEARALMMSTNNVLSPASGDPIIVPSQDVVLGLYYMTKEKINGKGEGMVFKDPNEAEKAYRTGQVELHSRVRVRITDTTIDDDGNRTTKTELRDTTCGRAILSLIMPEGLPFELINQAMGKKPIGRMLNKAYRDLGLKDTVVFADQIMYTGFHYAMVSGASVGINDMVIPEAKKEIVSAAEEEVAEIQEQFESGLVTAGEKYNKVIDIWSTANEKVSKAMMDNLSKEIVKNKDGEDEEQASFNSVFMMADSGARGSPAQIRQLAGMRGLMAKPDGSIIETPIVANFREGLNVLQYFISTHGARKGLADTALKTANSGYLTRRLVDVSQDVVIMEEDCGTYEGLYMKPLIEGGDVVEPLRERVLGRVLCEPVMKPGSEEELLPRNTLLDEKMCDVLEENSIDEVKVRSVITCDTDFGVCAHCYGRDLARGHMVNQGEAVGVIAAQSIGEPGTQLTMRTFHIGGAASRATAENNIQVKNPGTIKLHNAKWVVNSDKAHVITSRSTELTLTDEYGRERERYKVPYGAVLKKGEGDSVDGGETVANWDPHTHPIITEVEGRIKFVDLIDGVTMTRQTDELTGLSSIVVLETGQRTSAGKDMRPMVKLVDGKGNDVNIAGTDIPAQYFLPGNAIINLEDNSEVKIGDTLARIPQEGSKTRDITGGLPRVADLFEARKPKEPAILAEKTGTVSFGKETKGKRRLLITPTDGGDQHEEMIPKWRQLNVFEGEQVTKGEVIADGPEAPHDILRLRGVSAVANYIVNEVQEVYRLQGVKINDKHIETIVRQMLRKALILRAGDTNLLEGEMVEMSEVLAANAKAEADGKKPAIFERQLLGITKASLSTESFISAASFQETTRVLTEAAVGGKKDSLRGLKENVIVGRLIPAGTGYSYHKERMQRRLDELNVDIEPTMTAEQAEQQLADALNAGNSSAGDDSAE.

Zn(2+) is bound by residues Cys70, Cys72, Cys85, and Cys88. Residues Asp460, Asp462, and Asp464 each contribute to the Mg(2+) site. The Zn(2+) site is built by Cys814, Cys888, Cys895, and Cys898.

This sequence belongs to the RNA polymerase beta' chain family. As to quaternary structure, the RNAP catalytic core consists of 2 alpha, 1 beta, 1 beta' and 1 omega subunit. When a sigma factor is associated with the core the holoenzyme is formed, which can initiate transcription. Mg(2+) serves as cofactor. It depends on Zn(2+) as a cofactor.

The enzyme catalyses RNA(n) + a ribonucleoside 5'-triphosphate = RNA(n+1) + diphosphate. Its function is as follows. DNA-dependent RNA polymerase catalyzes the transcription of DNA into RNA using the four ribonucleoside triphosphates as substrates. The polypeptide is DNA-directed RNA polymerase subunit beta' (Idiomarina loihiensis (strain ATCC BAA-735 / DSM 15497 / L2-TR)).